We begin with the raw amino-acid sequence, 754 residues long: ATP-dependent RNA helicase DRS1 (754 aa).

Disordered stretches follow at residues 1–61 (MVVG…NLDE) and 119–227 (GLVK…GDEA). Acidic residues predominate over residues 19–34 (DSEDDVPILDSSDDEK). Residues 40–51 (TTKKRKGKNNKK) are compositionally biased toward basic residues. The segment covering 124–142 (AHIDSKQEEETEKEKVEKE) has biased composition (basic and acidic residues). 2 stretches are compositionally biased toward acidic residues: residues 167-193 (NQSE…QEEM) and 202-211 (DEIDEEDDSE). S210 carries the post-translational modification Phosphoserine. The Q motif motif lies at 233–261 (ENFNSLSLSRPVLKGLASLGYVKPSPIQS). A Helicase ATP-binding domain is found at 264-439 (IPIALLGKDI…SLSLKKPVRI (176 aa)). 277–284 (AVTGSGKT) contacts ATP. Residues 387–390 (DEAD) carry the DEAD box motif. Residues 450–641 (KLTQEFVRIR…SMNDTIEDIL (192 aa)) enclose the Helicase C-terminal domain. Residues 623 to 669 (IEETNKLVESMNDTIEDILVEEKEEKEILRAEMQLRKGENMLKHKKE) are a coiled coil. Residues 675-754 (RRTWFQSESD…NKKKGFKSRR (80 aa)) are disordered. Over residues 696 to 707 (RNKKVTNSKKRK) the composition is skewed to basic residues. The span at 724 to 736 (TKTDRIADQERTF) shows a compositional bias: basic and acidic residues. The segment covering 737-754 (KKQKSTNSNKKKGFKSRR) has biased composition (basic residues).

Belongs to the DEAD box helicase family. DDX27/DRS1 subfamily. Interacts with RRP1 and associates with pre-ribosomal particles.

Its subcellular location is the nucleus. The protein resides in the nucleolus. The enzyme catalyses ATP + H2O = ADP + phosphate + H(+). ATP-binding RNA helicase involved in ribosome assembly. The chain is ATP-dependent RNA helicase DRS1 (DRS1) from Saccharomyces cerevisiae (strain YJM789) (Baker's yeast).